The following is a 683-amino-acid chain: DNA ligase (683 aa).

NAD(+)-binding positions include 35-39, 84-85, and E115; these read DADYD and SL. The active-site N6-AMP-lysine intermediate is the K117. NAD(+)-binding residues include R138, E175, K293, and K317. Zn(2+) contacts are provided by C411, C414, C429, and C435. A BRCT domain is found at 598-683; sequence QTNSAVSGKT…LQNISTGAQQ (86 aa).

The protein belongs to the NAD-dependent DNA ligase family. LigA subfamily. It depends on Mg(2+) as a cofactor. Requires Mn(2+) as cofactor.

The enzyme catalyses NAD(+) + (deoxyribonucleotide)n-3'-hydroxyl + 5'-phospho-(deoxyribonucleotide)m = (deoxyribonucleotide)n+m + AMP + beta-nicotinamide D-nucleotide.. Functionally, DNA ligase that catalyzes the formation of phosphodiester linkages between 5'-phosphoryl and 3'-hydroxyl groups in double-stranded DNA using NAD as a coenzyme and as the energy source for the reaction. It is essential for DNA replication and repair of damaged DNA. The sequence is that of DNA ligase from Nitrosomonas eutropha (strain DSM 101675 / C91 / Nm57).